A 1154-amino-acid chain; its full sequence is DNA-directed RNA polymerase subunit beta' (1154 aa).

C60, C62, C75, and C78 together coordinate Zn(2+). Mg(2+) contacts are provided by D449, D451, and D453. Positions 774, 848, 855, and 858 each coordinate Zn(2+).

Belongs to the RNA polymerase beta' chain family. In terms of assembly, the RNAP catalytic core consists of 2 alpha, 1 beta, 1 beta' and 1 omega subunit. When a sigma factor is associated with the core the holoenzyme is formed, which can initiate transcription. It depends on Mg(2+) as a cofactor. Zn(2+) is required as a cofactor.

It carries out the reaction RNA(n) + a ribonucleoside 5'-triphosphate = RNA(n+1) + diphosphate. Functionally, DNA-dependent RNA polymerase catalyzes the transcription of DNA into RNA using the four ribonucleoside triphosphates as substrates. This is DNA-directed RNA polymerase subunit beta' from Desulforudis audaxviator (strain MP104C).